The sequence spans 490 residues: Cytochrome P450 2C1 (490 aa).

Heme is bound at residue C435.

This sequence belongs to the cytochrome P450 family. Heme serves as cofactor.

It is found in the endoplasmic reticulum membrane. Its subcellular location is the microsome membrane. It carries out the reaction an organic molecule + reduced [NADPH--hemoprotein reductase] + O2 = an alcohol + oxidized [NADPH--hemoprotein reductase] + H2O + H(+). Its function is as follows. Cytochromes P450 are a group of heme-thiolate monooxygenases. In liver microsomes, this enzyme is involved in an NADPH-dependent electron transport pathway. It oxidizes a variety of structurally unrelated compounds, including steroids, fatty acids, and xenobiotics. The polypeptide is Cytochrome P450 2C1 (CYP2C1) (Oryctolagus cuniculus (Rabbit)).